A 113-amino-acid chain; its full sequence is Large ribosomal subunit protein uL22 (113 aa).

Belongs to the universal ribosomal protein uL22 family. As to quaternary structure, part of the 50S ribosomal subunit.

This protein binds specifically to 23S rRNA; its binding is stimulated by other ribosomal proteins, e.g. L4, L17, and L20. It is important during the early stages of 50S assembly. It makes multiple contacts with different domains of the 23S rRNA in the assembled 50S subunit and ribosome. Functionally, the globular domain of the protein is located near the polypeptide exit tunnel on the outside of the subunit, while an extended beta-hairpin is found that lines the wall of the exit tunnel in the center of the 70S ribosome. The sequence is that of Large ribosomal subunit protein uL22 from Stenotrophomonas maltophilia (strain K279a).